The sequence spans 1312 residues: DNA repair protein RAD50 (1312 aa).

Positions 13, 38, 39, 41, 42, 43, 44, 67, 69, and 159 each coordinate ATP. Position 43 (T43) interacts with Mg(2+). Q159 is a binding site for Mg(2+). Coiled coils occupy residues 228–359 (TSKE…QADR), 401–598 (RERQ…AKLN), and 635–673 (SQDF…ITQL). S635 carries the post-translational modification Phosphoserine; by ATM. The region spanning 635–734 (SQDFESDLDR…RRDEMLGLVP (100 aa)) is the Zinc-hook domain. C681 and C684 together coordinate Zn(2+). A Phosphothreonine modification is found at T690. 2 coiled-coil regions span residues 706-734 (RLAP…GLVP) and 789-1079 (LTDV…GRQK). K959 is modified (N6-acetyllysine).

It belongs to the SMC family. RAD50 subfamily. Component of the MRN complex composed of two heterodimers RAD50 and MRE11 associated with a single NBN. The MRN complexes dimerize on DNA to form joined MRN-MRN oligomers required for DNA double-strand break repair. As part of the MRN complex, interacts with MCM8 and MCM9; the interaction recruits the complex to DNA repair sites. Component of the BASC complex, at least composed of BRCA1, MSH2, MSH6, MLH1, ATM, BLM, RAD50, MRE11 and NBN. Found in a complex with TERF2. Interacts with RINT1. Interacts with BRCA1 via its N-terminal domain. Interacts with DCLRE1C/Artemis. Interacts with MRNIP. Interacts with CYREN (via XLF motif). Interacts with C1QBP and MRE11; interaction takes place in absence of DNA damage to form the MRC (MRE11-RAD50-C1QBP) complex that inhibits the activity of MRE11. In terms of assembly, (Microbial infection) Interacts with herpes simplex virus 1 protein UL12. Zn(2+) serves as cofactor. Post-translationally, phosphorylation at Ser-635 by ATM in response to DNA damage is required for double-strand break (DSB) repair. As to expression, expressed at very low level in most tissues, except in testis where it is expressed at higher level. Expressed in fibroblasts.

It is found in the nucleus. It localises to the chromosome. Its subcellular location is the telomere. It catalyses the reaction ATP + H2O = ADP + phosphate + H(+). Component of the MRN complex, which plays a central role in double-strand break (DSB) repair, DNA recombination, maintenance of telomere integrity and meiosis. The MRN complex is involved in the repair of DNA double-strand breaks (DSBs) via homologous recombination (HR), an error-free mechanism which primarily occurs during S and G2 phases. The complex (1) mediates the end resection of damaged DNA, which generates proper single-stranded DNA, a key initial steps in HR, and is (2) required for the recruitment of other repair factors and efficient activation of ATM and ATR upon DNA damage. The MRN complex possesses single-strand endonuclease activity and double-strand-specific 3'-5' exonuclease activity, which are provided by MRE11, to initiate end resection, which is required for single-strand invasion and recombination. Within the complex, RAD50 is both required to bind DNA ends and hold them in close proximity and regulate the activity of MRE11. RAD50 provides an ATP-dependent control of MRE11 by positioning DNA ends into the MRE11 active site: ATP-binding induces a large structural change from an open form with accessible MRE11 nuclease sites into a closed form. The MRN complex is also required for DNA damage signaling via activation of the ATM and ATR kinases: the nuclease activity of MRE11 is not required to activate ATM and ATR. The MRN complex is also required for the processing of R-loops. In telomeres the MRN complex may modulate t-loop formation. The polypeptide is DNA repair protein RAD50 (Homo sapiens (Human)).